Reading from the N-terminus, the 158-residue chain is 2-C-methyl-D-erythritol 2,4-cyclodiphosphate synthase (158 aa).

A divalent metal cation contacts are provided by aspartate 9 and histidine 11. Residues 9 to 11 and 35 to 36 contribute to the 4-CDP-2-C-methyl-D-erythritol 2-phosphate site; these read DVH and HS. Position 43 (histidine 43) interacts with a divalent metal cation. 4-CDP-2-C-methyl-D-erythritol 2-phosphate-binding positions include 57–59, 62–66, 101–107, 133–136, phenylalanine 140, and arginine 143; these read DIG, FPDTD, AQKPKMA, and TTTE.

The protein belongs to the IspF family. In terms of assembly, homotrimer. Requires a divalent metal cation as cofactor.

It catalyses the reaction 4-CDP-2-C-methyl-D-erythritol 2-phosphate = 2-C-methyl-D-erythritol 2,4-cyclic diphosphate + CMP. The protein operates within isoprenoid biosynthesis; isopentenyl diphosphate biosynthesis via DXP pathway; isopentenyl diphosphate from 1-deoxy-D-xylulose 5-phosphate: step 4/6. Functionally, involved in the biosynthesis of isopentenyl diphosphate (IPP) and dimethylallyl diphosphate (DMAPP), two major building blocks of isoprenoid compounds. Catalyzes the conversion of 4-diphosphocytidyl-2-C-methyl-D-erythritol 2-phosphate (CDP-ME2P) to 2-C-methyl-D-erythritol 2,4-cyclodiphosphate (ME-CPP) with a corresponding release of cytidine 5-monophosphate (CMP). This Geobacillus sp. (strain WCH70) protein is 2-C-methyl-D-erythritol 2,4-cyclodiphosphate synthase.